The chain runs to 559 residues: Frizzled-1 (559 aa).

A signal peptide spans 1–35 (MKHSHLLQRCSAQLCTRGSSLILSLLLSVCLSVEG). Residues 36–239 (QYNGEKGISI…FAPEELNFAR (204 aa)) lie on the Extracellular side of the membrane. One can recognise an FZ domain in the interval 46–165 (PDHGYCQPIS…NGAGELCVGQ (120 aa)). 5 cysteine pairs are disulfide-bonded: C51-C112, C59-C105, C96-C133, C122-C162, and C126-C150. An N-linked (GlcNAc...) asparagine glycan is attached at N65. N-linked (GlcNAc...) asparagine glycosylation is present at N166. The chain crosses the membrane as a helical span at residues 240-260 (IWIGIWSVLCCASTLFTVLTY). Over 261–273 (LVDMKRFSYPERP) the chain is Cytoplasmic. A helical transmembrane segment spans residues 274–294 (IIFLSGCYTMVAIAYIAGFLL). The Extracellular segment spans residues 295 to 321 (EDKVVCNERFAEDGYKTVAQGTKKEGC). A helical membrane pass occupies residues 322–342 (TFLFMMLYFFSMASSIWWVIL). Topologically, residues 343–364 (SLTWFLAAGMKWGHEAIEANSQ) are cytoplasmic. The chain crosses the membrane as a helical span at residues 365–385 (YFHLAAWAVPAIKTITILAVG). Residues 386–408 (QVDGDTLSGVCFVGINNVDALRG) are Extracellular-facing. Residues 409–429 (FVLAPLFVYLFIGTSFLLAGF) form a helical membrane-spanning segment. Residues 430 to 455 (VSLFRIRTIMKHDGTKTEKLEKLMVR) are Cytoplasmic-facing. Residues 456–476 (IGIFSVLYTVPATIVIACYFY) traverse the membrane as a helical segment. The Extracellular portion of the chain corresponds to 477-513 (EQAFREQWEKSWISQSCKTYAIPCPSTGHPPMSPDFT). The chain crosses the membrane as a helical span at residues 514 to 534 (VFMIKYLMTLIVGITSGFWIW). Residues 535 to 559 (SGKTLNSWRKFYTRLTNSKQGETTV) are Cytoplasmic-facing. The Lys-Thr-X-X-X-Trp motif, mediates interaction with the PDZ domain of Dvl family members motif lies at 537 to 542 (KTLNSW). The PDZ-binding motif lies at 557-559 (TTV).

This sequence belongs to the G-protein coupled receptor Fz/Smo family. As to quaternary structure, interacts with wnt8. In terms of tissue distribution, in the embryo, expressed in the heart, pronephros and otic vesicles.

The protein localises to the cell membrane. Receptor for Wnt proteins. Functions in the canonical Wnt/beta-catenin signaling pathway. The canonical Wnt/beta-catenin signaling pathway leads to the activation of disheveled proteins, inhibition of GSK-3 kinase, nuclear accumulation of beta-catenin and activation of Wnt target genes. A second signaling pathway involving PKC and calcium fluxes has been seen for some family members, but it is not yet clear if it represents a distinct pathway or if it can be integrated in the canonical pathway, as PKC seems to be required for Wnt-mediated inactivation of GSK-3 kinase. Both pathways seem to involve interactions with G-proteins. May be involved in transduction and intercellular transmission of polarity information during tissue morphogenesis and/or in differentiated tissues. The polypeptide is Frizzled-1 (fzd1) (Xenopus laevis (African clawed frog)).